The sequence spans 243 residues: Methylthioribulose-1-phosphate dehydratase (243 aa).

Residues 1-22 form a disordered region; sequence MCPADQTVATNNNDHLVQSEDP. Residues 7–16 are compositionally biased toward polar residues; sequence TVATNNNDHL. C103 lines the substrate pocket. The Zn(2+) site is built by H120 and H122. Residue E149 is the Proton donor/acceptor of the active site. A Zn(2+)-binding site is contributed by H205.

It belongs to the aldolase class II family. MtnB subfamily. Zn(2+) serves as cofactor.

It is found in the cytoplasm. The enzyme catalyses 5-(methylsulfanyl)-D-ribulose 1-phosphate = 5-methylsulfanyl-2,3-dioxopentyl phosphate + H2O. The protein operates within amino-acid biosynthesis; L-methionine biosynthesis via salvage pathway; L-methionine from S-methyl-5-thio-alpha-D-ribose 1-phosphate: step 2/6. Functionally, catalyzes the dehydration of methylthioribulose-1-phosphate (MTRu-1-P) into 2,3-diketo-5-methylthiopentyl-1-phosphate (DK-MTP-1-P). This chain is Methylthioribulose-1-phosphate dehydratase, found in Penicillium rubens (strain ATCC 28089 / DSM 1075 / NRRL 1951 / Wisconsin 54-1255) (Penicillium chrysogenum).